The primary structure comprises 352 residues: uncharacterized protein (352 aa).

A chloroplast-targeting transit peptide spans 1–55 (MAMAALTSSSSAITLLNKPFLPNRSSFFSSDSQSPLLRFSASTSVRSRFPSAAIS).

The protein belongs to the methyltransferase superfamily.

The protein resides in the plastid. Its subcellular location is the chloroplast. The protein localises to the plastoglobule. This is an uncharacterized protein from Arabidopsis thaliana (Mouse-ear cress).